The following is a 199-amino-acid chain: MKDKEIKEEVLKEEINKEVNEKKKCECEEGKEEAHEHKNDEHACCGKHNHKEEIEKLKAEIEEWKNSFLRKQADFQNFTKRKEKEVDELKKFASEKIITQFLGSLDNFERAIESSSESKDFDSLLQGVEMIVRNLKDIMSSEDVEEIPTEGAFNPEYHHAVGVETSEDKKEDEIVKVLQKGYMMKGKVIRPAMVIVCKK.

Belongs to the GrpE family. Homodimer.

It is found in the cytoplasm. Participates actively in the response to hyperosmotic and heat shock by preventing the aggregation of stress-denatured proteins, in association with DnaK and GrpE. It is the nucleotide exchange factor for DnaK and may function as a thermosensor. Unfolded proteins bind initially to DnaJ; upon interaction with the DnaJ-bound protein, DnaK hydrolyzes its bound ATP, resulting in the formation of a stable complex. GrpE releases ADP from DnaK; ATP binding to DnaK triggers the release of the substrate protein, thus completing the reaction cycle. Several rounds of ATP-dependent interactions between DnaJ, DnaK and GrpE are required for fully efficient folding. In Fusobacterium nucleatum subsp. nucleatum (strain ATCC 25586 / DSM 15643 / BCRC 10681 / CIP 101130 / JCM 8532 / KCTC 2640 / LMG 13131 / VPI 4355), this protein is Protein GrpE.